The following is a 103-amino-acid chain: Small ribosomal subunit protein uS10 (103 aa).

The protein belongs to the universal ribosomal protein uS10 family. Part of the 30S ribosomal subunit.

Functionally, involved in the binding of tRNA to the ribosomes. The polypeptide is Small ribosomal subunit protein uS10 (Psychromonas ingrahamii (strain DSM 17664 / CCUG 51855 / 37)).